The primary structure comprises 764 residues: Probable glutamate--tRNA ligase, cytoplasmic (764 aa).

An L-glutamate-binding site is contributed by 228-230 (RFP). A 'HIGH' region motif is present at residues 233–242 (PSGYMHIGHC). Position 238 (H238) interacts with ATP. L-glutamate contacts are provided by residues D264, 404-408 (YDFAC), and R422. ATP-binding positions include E425 and 460 to 464 (LLSKR). The 'KMSKS' region motif lies at 460-464 (LLSKR).

The protein belongs to the class-I aminoacyl-tRNA synthetase family. Glutamate--tRNA ligase type 2 subfamily.

Its subcellular location is the cytoplasm. The enzyme catalyses tRNA(Glu) + L-glutamate + ATP = L-glutamyl-tRNA(Glu) + AMP + diphosphate. Functionally, catalyzes the attachment of glutamate to tRNA(Glu) in a two-step reaction: glutamate is first activated by ATP to form Glu-AMP and then transferred to the acceptor end of tRNA(Glu). The chain is Probable glutamate--tRNA ligase, cytoplasmic (gluS) from Dictyostelium discoideum (Social amoeba).